A 119-amino-acid chain; its full sequence is UPF0102 protein FN1370 (119 aa).

The protein belongs to the UPF0102 family.

This chain is UPF0102 protein FN1370, found in Fusobacterium nucleatum subsp. nucleatum (strain ATCC 25586 / DSM 15643 / BCRC 10681 / CIP 101130 / JCM 8532 / KCTC 2640 / LMG 13131 / VPI 4355).